We begin with the raw amino-acid sequence, 928 residues long: Heme/hemopexin-binding protein (928 aa).

Positions 1 to 21 (MYKLNVISLIILTTCSGAAYA) are cleaved as a signal peptide. 10 tandem repeats follow at residues 101 to 106 (NGKVYL), 149 to 154 (KDRQVL), 155 to 160 (KEGLVL), 161 to 166 (KDGQVV), 167 to 172 (KEGQVI), 205 to 210 (NGKVYL), 279 to 284 (NGKVVL), 410 to 415 (NGKVNL), 635 to 640 (NGFVHL), and 674 to 679 (NGKVSM). The interval 101–679 (NGKVYLANPN…RLGMNGKVSM (579 aa)) is 6 X 6 AA approximate repeats. The interval 149-172 (KDRQVLKEGLVLKDGQVVKEGQVI) is 4 X 6 AA approximate tandem repeats.

It is found in the secreted. Binds heme/hemopexin complexes. The protein is Heme/hemopexin-binding protein (hxuA) of Haemophilus influenzae.